The following is an 847-amino-acid chain: Alpha-glucuronidase A (847 aa).

The N-terminal stretch at 1 to 22 (MRSFLLLTALLGVAAVAEDGLA) is a signal peptide. Residues Asn48, Asn78, Asn227, Asn315, Asn349, Asn457, Asn472, Asn534, Asn583, Asn689, Asn738, Asn739, and Asn769 are each glycosylated (N-linked (GlcNAc...) asparagine).

It belongs to the glycosyl hydrolase 67 family.

The protein localises to the secreted. It carries out the reaction an alpha-D-glucuronoside + H2O = D-glucuronate + an alcohol. Its function is as follows. Alpha-glucuronidase involved in the hydrolysis of xylan, a major structural heterogeneous polysaccharide found in plant biomass representing the second most abundant polysaccharide in the biosphere, after cellulose. Releases 4-O-methylglucuronic acid from xylan. The chain is Alpha-glucuronidase A (aguA) from Emericella nidulans (strain FGSC A4 / ATCC 38163 / CBS 112.46 / NRRL 194 / M139) (Aspergillus nidulans).